Consider the following 1183-residue polypeptide: ATP-dependent helicase/nuclease subunit A (1183 aa).

Residues 3-461 form the UvrD-like helicase ATP-binding domain; sequence VQWTDEQQRA…IDLTKNFRSR (459 aa). Residue 24–31 participates in ATP binding; it reads AAAGSGKT. The 297-residue stretch at 473–769 folds into the UvrD-like helicase C-terminal domain; sequence RQVMDEAVGE…RIMTIHQSKG (297 aa).

The protein belongs to the helicase family. AddA subfamily. Heterodimer of AddA and AddB/RexB. Requires Mg(2+) as cofactor.

It carries out the reaction Couples ATP hydrolysis with the unwinding of duplex DNA by translocating in the 3'-5' direction.. The catalysed reaction is ATP + H2O = ADP + phosphate + H(+). Functionally, the heterodimer acts as both an ATP-dependent DNA helicase and an ATP-dependent, dual-direction single-stranded exonuclease. Recognizes the chi site generating a DNA molecule suitable for the initiation of homologous recombination. The AddA nuclease domain is required for chi fragment generation; this subunit has the helicase and 3' -&gt; 5' nuclease activities. The polypeptide is ATP-dependent helicase/nuclease subunit A (Exiguobacterium sibiricum (strain DSM 17290 / CCUG 55495 / CIP 109462 / JCM 13490 / 255-15)).